A 62-amino-acid chain; its full sequence is MTIAFQLAVFALIATSLILVIGVPVVFASPDGWSSNKNIVFSGTSLWIGLVFLVGILNSLIS.

The next 2 helical transmembrane spans lie at 8 to 28 (AVFA…VVFA) and 41 to 61 (FSGT…NSLI).

The protein belongs to the PsbZ family. In terms of assembly, PSII is composed of 1 copy each of membrane proteins PsbA, PsbB, PsbC, PsbD, PsbE, PsbF, PsbH, PsbI, PsbJ, PsbK, PsbL, PsbM, PsbT, PsbY, PsbZ, Psb30/Ycf12, at least 3 peripheral proteins of the oxygen-evolving complex and a large number of cofactors. It forms dimeric complexes.

Its subcellular location is the plastid. It localises to the chloroplast thylakoid membrane. In terms of biological role, may control the interaction of photosystem II (PSII) cores with the light-harvesting antenna, regulates electron flow through the 2 photosystem reaction centers. PSII is a light-driven water plastoquinone oxidoreductase, using light energy to abstract electrons from H(2)O, generating a proton gradient subsequently used for ATP formation. The polypeptide is Photosystem II reaction center protein Z (Piper cenocladum (Ant piper)).